Reading from the N-terminus, the 162-residue chain is Succinate dehydrogenase assembly factor 2, mitochondrial (162 aa).

Residues 1–35 constitute a mitochondrion transit peptide; sequence MHNMFPALTKTLSLQGYKIINSQTGSAAWSCGRRW.

Belongs to the SDHAF2 family. As to quaternary structure, interacts with the flavoprotein subunit within the SDH catalytic dimer.

Its subcellular location is the mitochondrion matrix. Its function is as follows. Plays an essential role in the assembly of succinate dehydrogenase (SDH), an enzyme complex (also referred to as respiratory complex II) that is a component of both the tricarboxylic acid (TCA) cycle and the mitochondrial electron transport chain, and which couples the oxidation of succinate to fumarate with the reduction of ubiquinone (coenzyme Q) to ubiquinol. Required for flavinylation (covalent attachment of FAD) of the flavoprotein subunit of the SDH catalytic dimer. The chain is Succinate dehydrogenase assembly factor 2, mitochondrial from Saccharomyces cerevisiae (strain RM11-1a) (Baker's yeast).